Reading from the N-terminus, the 300-residue chain is N-acetylmuramic acid 6-phosphate etherase (300 aa).

In terms of domain architecture, SIS spans 57–220 (IAVAFQSGGR…TTGAMIRTGK (164 aa)). Residue Glu85 is the Proton donor of the active site. Glu116 is a catalytic residue.

It belongs to the GCKR-like family. MurNAc-6-P etherase subfamily. In terms of assembly, homodimer.

The enzyme catalyses N-acetyl-D-muramate 6-phosphate + H2O = N-acetyl-D-glucosamine 6-phosphate + (R)-lactate. It functions in the pathway amino-sugar metabolism; 1,6-anhydro-N-acetylmuramate degradation. The protein operates within amino-sugar metabolism; N-acetylmuramate degradation. It participates in cell wall biogenesis; peptidoglycan recycling. Specifically catalyzes the cleavage of the D-lactyl ether substituent of MurNAc 6-phosphate, producing GlcNAc 6-phosphate and D-lactate. Together with AnmK, is also required for the utilization of anhydro-N-acetylmuramic acid (anhMurNAc) either imported from the medium or derived from its own cell wall murein, and thus plays a role in cell wall recycling. This chain is N-acetylmuramic acid 6-phosphate etherase, found in Aliivibrio fischeri (strain MJ11) (Vibrio fischeri).